Reading from the N-terminus, the 602-residue chain is Histone-arginine methyltransferase CARM1 (602 aa).

The 308-residue stretch at 117–424 folds into the SAM-dependent MTase PRMT-type domain; it reads AVQYFQFYGY…KKQSYDISIV (308 aa). 6 residues coordinate S-adenosyl-L-methionine: Q130, R139, G163, E185, E214, and S242. The interval 470 to 602 is transactivation domain; that stretch reads TGGAYTMNTG…ITTNTMHYGS (133 aa).

Belongs to the class I-like SAM-binding methyltransferase superfamily. Protein arginine N-methyltransferase family. Homodimer.

The protein localises to the nucleus. It is found in the cytoplasm. It localises to the chromosome. It carries out the reaction L-arginyl-[protein] + 2 S-adenosyl-L-methionine = N(omega),N(omega)-dimethyl-L-arginyl-[protein] + 2 S-adenosyl-L-homocysteine + 2 H(+). Functionally, methylates (mono- and asymmetric dimethylation) the guanidino nitrogens of arginyl residues in several proteins involved in DNA packaging, transcription regulation, pre-mRNA splicing, and mRNA stability. Recruited to promoters upon gene activation together with histone acetyltransferases from EP300/P300 and p160 families, methylates histone H3 at 'Arg-17' (H3R17me) and activates transcription via chromatin remodeling. The polypeptide is Histone-arginine methyltransferase CARM1 (carm1) (Xenopus laevis (African clawed frog)).